Here is a 279-residue protein sequence, read N- to C-terminus: HTH-type transcriptional regulator HdfR (279 aa).

The 58-residue stretch at methionine 1 to threonine 58 folds into the HTH lysR-type domain. Residues phenylalanine 18–arginine 37 constitute a DNA-binding region (H-T-H motif).

It belongs to the LysR transcriptional regulatory family.

Functionally, negatively regulates the transcription of the flagellar master operon flhDC by binding to the upstream region of the operon. This Escherichia coli O17:K52:H18 (strain UMN026 / ExPEC) protein is HTH-type transcriptional regulator HdfR.